Here is a 116-residue protein sequence, read N- to C-terminus: Flagellar transcriptional regulator FlhD (116 aa).

The protein belongs to the FlhD family. Homodimer; disulfide-linked. Forms a heterohexamer composed of two FlhC and four FlhD subunits. Each FlhC binds a FlhD dimer, forming a heterotrimer, and a hexamer assembles by dimerization of two heterotrimers.

The protein resides in the cytoplasm. In terms of biological role, functions in complex with FlhC as a master transcriptional regulator that regulates transcription of several flagellar and non-flagellar operons by binding to their promoter region. Activates expression of class 2 flagellar genes, including fliA, which is a flagellum-specific sigma factor that turns on the class 3 genes. Also regulates genes whose products function in a variety of physiological pathways. The chain is Flagellar transcriptional regulator FlhD from Escherichia coli O157:H7.